We begin with the raw amino-acid sequence, 371 residues long: Capsular polysaccharide phosphotransferase cps12A (371 aa).

Belongs to the stealth family.

In terms of biological role, part of a capsular polysaccharide synthesis locus. This chain is Capsular polysaccharide phosphotransferase cps12A (cps12A), found in Actinobacillus pleuropneumoniae (Haemophilus pleuropneumoniae).